The following is a 165-amino-acid chain: uncharacterized protein (165 aa).

Residues 4-26 (FVIGTMIALAGLLVGGGVGSYFT) traverse the membrane as a helical segment.

The protein localises to the membrane. This is an uncharacterized protein from Aquifex aeolicus (strain VF5).